A 146-amino-acid polypeptide reads, in one-letter code: Large ribosomal subunit protein uL11 (146 aa).

It belongs to the universal ribosomal protein uL11 family. In terms of assembly, part of the ribosomal stalk of the 50S ribosomal subunit. Interacts with L10 and the large rRNA to form the base of the stalk. L10 forms an elongated spine to which L12 dimers bind in a sequential fashion forming a multimeric L10(L12)X complex. In terms of processing, one or more lysine residues are methylated.

Its function is as follows. Forms part of the ribosomal stalk which helps the ribosome interact with GTP-bound translation factors. In Wolbachia pipientis wMel, this protein is Large ribosomal subunit protein uL11.